The following is a 292-amino-acid chain: Cyclic dipurine nucleotide synthase (292 aa).

An ATP-binding site is contributed by Gln47. 48–52 (GSYRN) lines the GTP pocket. Mg(2+) contacts are provided by Asp61 and Asp63. Residues Asp63, 121–122 (NK), and Asp136 contribute to the ATP site. Residue Asp136 coordinates Mg(2+). Lys197 and Ser216 together coordinate GTP.

It belongs to the CD-NTase family. E01 subfamily. Requires Mg(2+) as cofactor.

It carries out the reaction 2 ATP = 3',3'-c-di-AMP + 2 diphosphate. The enzyme catalyses 2 GTP = 3',3'-c-di-GMP + 2 diphosphate. It catalyses the reaction GTP + ATP = 3',3'-cGAMP + 2 diphosphate. Cyclic nucleotide synthase (second messenger synthase) of a CBASS antivirus system. CBASS (cyclic oligonucleotide-based antiphage signaling system) provides immunity against bacteriophage. The CD-NTase protein synthesizes cyclic nucleotides in response to infection; these serve as specific second messenger signals. The signals activate a diverse range of effectors, leading to bacterial cell death and thus abortive phage infection. A type I-A(GA) CBASS system. In terms of biological role, cyclic dinucleotide synthase that catalyzes the synthesis of 3'3'-cyclic GMP-AMP (cGAMP) from GTP and ATP, and of c-di-AMP and c-di-GMP, that are second messengers for cell signal transduction. This is Cyclic dipurine nucleotide synthase from Elizabethkingia meningoseptica (Chryseobacterium meningosepticum).